The chain runs to 345 residues: Anthranilate phosphoribosyltransferase (345 aa).

5-phospho-alpha-D-ribose 1-diphosphate is bound by residues G84, 87-88 (GD), T92, 94-97 (NIST), 112-120 (KHGNRSVSS), and S124. Residue G84 participates in anthranilate binding. S96 is a binding site for Mg(2+). N115 is an anthranilate binding site. R170 is an anthranilate binding site. Mg(2+) contacts are provided by D229 and E230.

Belongs to the anthranilate phosphoribosyltransferase family. As to quaternary structure, homodimer. Requires Mg(2+) as cofactor.

The catalysed reaction is N-(5-phospho-beta-D-ribosyl)anthranilate + diphosphate = 5-phospho-alpha-D-ribose 1-diphosphate + anthranilate. It functions in the pathway amino-acid biosynthesis; L-tryptophan biosynthesis; L-tryptophan from chorismate: step 2/5. Catalyzes the transfer of the phosphoribosyl group of 5-phosphorylribose-1-pyrophosphate (PRPP) to anthranilate to yield N-(5'-phosphoribosyl)-anthranilate (PRA). This is Anthranilate phosphoribosyltransferase from Xanthomonas axonopodis pv. citri (strain 306).